The primary structure comprises 116 residues: Large ribosomal subunit protein uL18 (116 aa).

The protein belongs to the universal ribosomal protein uL18 family. Part of the 50S ribosomal subunit; part of the 5S rRNA/L5/L18/L25 subcomplex. Contacts the 5S and 23S rRNAs.

Functionally, this is one of the proteins that bind and probably mediate the attachment of the 5S RNA into the large ribosomal subunit, where it forms part of the central protuberance. The sequence is that of Large ribosomal subunit protein uL18 from Shewanella piezotolerans (strain WP3 / JCM 13877).